The sequence spans 372 residues: Methylthioribose-1-phosphate isomerase 2 (372 aa).

The active-site Proton donor is Asp254.

Belongs to the eIF-2B alpha/beta/delta subunits family. MtnA subfamily.

The protein localises to the cytoplasm. It is found in the nucleus. It catalyses the reaction 5-(methylsulfanyl)-alpha-D-ribose 1-phosphate = 5-(methylsulfanyl)-D-ribulose 1-phosphate. Its pathway is amino-acid biosynthesis; L-methionine biosynthesis via salvage pathway; L-methionine from S-methyl-5-thio-alpha-D-ribose 1-phosphate: step 1/6. Functionally, catalyzes the interconversion of methylthioribose-1-phosphate (MTR-1-P) into methylthioribulose-1-phosphate (MTRu-1-P). The polypeptide is Methylthioribose-1-phosphate isomerase 2 (Trypanosoma cruzi (strain CL Brener)).